A 479-amino-acid chain; its full sequence is UDP-glycosyltransferase 71B6 (479 aa).

Residues Ser275, 342-344, 359-367, and 381-384 contribute to the UDP-alpha-D-glucose site; these read AEQ, HGGWNSTLE, and YAEQ.

This sequence belongs to the UDP-glycosyltransferase family.

Its function is as follows. Glucosyltransferase that glucosylates the (+) enantiomer of abscisic acid ((+)-ABA). Is not active on structural analogs with alterations to the 8'- and 9'- methyl groups. The polypeptide is UDP-glycosyltransferase 71B6 (UGT71B6) (Arabidopsis thaliana (Mouse-ear cress)).